The following is a 432-amino-acid chain: Glutamyl-tRNA reductase (432 aa).

Substrate contacts are provided by residues 55 to 58 (TCNR), serine 114, 119 to 121 (ETQ), and glutamine 125. Cysteine 56 functions as the Nucleophile in the catalytic mechanism. Residue 194 to 199 (GAGEMI) participates in NADP(+) binding.

It belongs to the glutamyl-tRNA reductase family. As to quaternary structure, homodimer.

The catalysed reaction is (S)-4-amino-5-oxopentanoate + tRNA(Glu) + NADP(+) = L-glutamyl-tRNA(Glu) + NADPH + H(+). Its pathway is porphyrin-containing compound metabolism; protoporphyrin-IX biosynthesis; 5-aminolevulinate from L-glutamyl-tRNA(Glu): step 1/2. In terms of biological role, catalyzes the NADPH-dependent reduction of glutamyl-tRNA(Glu) to glutamate 1-semialdehyde (GSA). The chain is Glutamyl-tRNA reductase from Burkholderia lata (strain ATCC 17760 / DSM 23089 / LMG 22485 / NCIMB 9086 / R18194 / 383).